Reading from the N-terminus, the 118-residue chain is Fluoride-specific ion channel FluC 1 (118 aa).

2 helical membrane-spanning segments follow: residues 5–25 and 47–67; these read FLLV…ISVL and FLLG…FLGT. Residues glycine 71 and threonine 74 each coordinate Na(+). A helical membrane pass occupies residues 98–118; that stretch reads YLGFTYVFGLIAAFLGMMLGV.

This sequence belongs to the fluoride channel Fluc/FEX (TC 1.A.43) family.

The protein resides in the cell membrane. It catalyses the reaction fluoride(in) = fluoride(out). With respect to regulation, na(+) is not transported, but it plays an essential structural role and its presence is essential for fluoride channel function. In terms of biological role, fluoride-specific ion channel. Important for reducing fluoride concentration in the cell, thus reducing its toxicity. The protein is Fluoride-specific ion channel FluC 1 of Listeria monocytogenes serovar 1/2a (strain ATCC BAA-679 / EGD-e).